The primary structure comprises 262 residues: MQTPVNSFKAALREGPVQLGFWLALAHPDIAEICAGQGYDWLLIDGEHGPQTLPGIVAQLRAVEATPPCSAIVRVPGHDSVTIKQVLDLGAQTLMVPMVETAEQAKAIVTASRYPPAGERGLGGARASRWGGYPAYVAEANAQVCIIAQIETATAVDNIEAIAAVDGIDALFLGPADLAATEGLLGASSFDALFKLTGEALARIVATGKPAGILSRDERLVQQFLDGGARFIANGIDSFTFAKGAGDGLRRWRERIAAQGGV.

The Proton acceptor role is filled by His-48. Residue Gln-149 coordinates substrate. Glu-151 is a Mg(2+) binding site. Substrate contacts are provided by Ala-176 and Asp-177. Asp-177 lines the Mg(2+) pocket.

This sequence belongs to the HpcH/HpaI aldolase family.

It carries out the reaction (S)-4-hydroxy-2-oxopentanoate = acetaldehyde + pyruvate. Its pathway is xenobiotic degradation; biphenyl degradation. In terms of biological role, catalyzes the reversible retro-aldol cleavage of 4-hydroxy-2-oxovalerate to pyruvate and acetaldehyde. The chain is 4-hydroxy-2-oxovalerate aldolase (bphF) from Novosphingobium aromaticivorans (Sphingomonas aromaticivorans).